A 95-amino-acid chain; its full sequence is Ubiquinol-cytochrome-c reductase complex assembly factor 3 (95 aa).

Residues 1 to 7 lie on the Mitochondrial matrix side of the membrane; it reads MTTLRKL. A helical membrane pass occupies residues 8-28; that stretch reads LLVGALLGAGAGVGTALFALV. Positions 23-80 are mediates lipid-binding; it reads ALFALVTPGEERKQAMLKEMPEQYPQRRDEAARTKELLLATLQEAAATQENVAWRKNW. Over 29 to 95 the chain is Mitochondrial intermembrane; the sequence is TPGEERKQAM…GGGGGGGRSA (67 aa).

This sequence belongs to the UQCC3 family. In terms of assembly, associates with the ubiquinol-cytochrome c reductase complex (mitochondrial respiratory chain complex III(CIII) or cytochrome b-c1 complex). Interacts with UQCC1. Forms a complex, named COMC, composed of UQCC1, UQCC2; UQCC3 and UQCC4; mediates MT-CYB hemylation and association with the first nuclear-encoded complex III subunit UQCRQ. Probably cleaved by OMA1 under mitochondrial stress conditions.

It is found in the mitochondrion inner membrane. Required for the assembly of the ubiquinol-cytochrome c reductase complex (mitochondrial respiratory chain complex III or cytochrome b-c1 complex), mediating cytochrome b recruitment and probably stabilization within the complex. Thereby, plays an important role in ATP production by mitochondria. Cardiolipin-binding protein, it may also control the cardiolipin composition of mitochondria membranes and their morphology. The chain is Ubiquinol-cytochrome-c reductase complex assembly factor 3 from Bos taurus (Bovine).